The following is a 581-amino-acid chain: FAD-linked oxidoreductase easE (581 aa).

The signal sequence occupies residues 1-25 (MYRLLGPLACLALAWFFTWAPSGRC). N-linked (GlcNAc...) asparagine glycans are attached at residues asparagine 44 and asparagine 73. The FAD-binding PCMH-type domain occupies 122–306 (HQGRIPLYSA…AQATIRVFPD (185 aa)). Asparagine 369 is a glycosylation site (N-linked (GlcNAc...) asparagine).

This sequence belongs to the oxygen-dependent FAD-linked oxidoreductase family. The cofactor is FAD.

Its pathway is alkaloid biosynthesis; ergot alkaloid biosynthesis. Functionally, FAD-linked oxidoreductase; part of the gene cluster that mediates the biosynthesis of fungal ergot alkaloid. DmaW catalyzes the first step of ergot alkaloid biosynthesis by condensing dimethylallyl diphosphate (DMAP) and tryptophan to form 4-dimethylallyl-L-tryptophan. The second step is catalyzed by the methyltransferase easF that methylates 4-dimethylallyl-L-tryptophan in the presence of S-adenosyl-L-methionine, resulting in the formation of 4-dimethylallyl-L-abrine. The catalase easC and the FAD-dependent oxidoreductase easE then transform 4-dimethylallyl-L-abrine to chanoclavine-I which is further oxidized by easD in the presence of NAD(+), resulting in the formation of chanoclavine-I aldehyde. Agroclavine dehydrogenase easG then mediates the conversion of chanoclavine-I aldehyde to agroclavine via a non-enzymatic adduct reaction: the substrate is an iminium intermediate that is formed spontaneously from chanoclavine-I aldehyde in the presence of glutathione. Further conversion of agroclavine to paspalic acid is a two-step process involving oxidation of agroclavine to elymoclavine and of elymoclavine to paspalic acid, the second step being performed by the elymoclavine oxidase cloA. However, cloA does not encode a functional enzyme indicating that C.fusiformis terminates its ergot alkaloid pathway at elymoclavine. In Claviceps fusiformis (Ergot fungus), this protein is FAD-linked oxidoreductase easE.